A 492-amino-acid polypeptide reads, in one-letter code: Membrane-bound glycerophospholipid O-acyltransferase 1 (492 aa).

6 helical membrane passes run 33-53 (VNFVACQLFALSAAFWFRIYL), 69-89 (ILGIYFVVFCFGWYAVHLFVL), 125-145 (IYIFHYGILTTDFSGPLMIVT), 179-199 (PSLLEYLSYHLNFMSVIAGPC), 237-257 (MGAVIQKLCVTLMSLLLFLTL), and 296-316 (YFAWTLADAVHNAAGFGFNGM). Active-site residues include Asn349 and His380. Transmembrane regions (helical) follow at residues 370 to 390 (VLTFLLSALWHGVYPGYYFTF), 423 to 443 (VVTWAVTQLAVSYTAAPFVML), and 452 to 472 (YKSVFFFLHIICLLIILFLPI). At Ser486 the chain carries Phosphoserine.

Belongs to the membrane-bound acyltransferase family. As to expression, highly expressed in stomach, epididymis, and colon.

It localises to the endoplasmic reticulum membrane. It carries out the reaction a 1-acyl-sn-glycero-3-phosphoethanolamine + an acyl-CoA = a 1,2-diacyl-sn-glycero-3-phosphoethanolamine + CoA. The enzyme catalyses a 1-acyl-sn-glycero-3-phospho-L-serine + an acyl-CoA = a 1,2-diacyl-sn-glycero-3-phospho-L-serine + CoA. The catalysed reaction is a 1-acyl-sn-glycero-3-phosphocholine + an acyl-CoA = a 1,2-diacyl-sn-glycero-3-phosphocholine + CoA. It catalyses the reaction a 1-O-(1Z-alkenyl)-sn-glycero-3-phosphoethanolamine + (9Z)-octadecenoyl-CoA = 1-O-(1Z)-alkenyl-2-(9Z)-octadecenoyl-sn-glycero-3-phosphoethanolamine + CoA. It carries out the reaction 1-octadecanoyl-sn-glycero-3-phosphoethanolamine + (9Z)-octadecenoyl-CoA = 1-octadecanoyl-2-(9Z-octadecenoyl)-sn-glycero-3-phosphoethanolamine + CoA. The enzyme catalyses 1-(9Z-octadecenoyl)-sn-glycero-3-phospho-L-serine + (9Z)-octadecenoyl-CoA = 1,2-di-(9Z)-octadecenoyl-sn-glycero-3-phospho-L-serine + CoA. The catalysed reaction is 1-(9Z-octadecenoyl)-sn-glycero-3-phosphoethanolamine + (9Z)-octadecenoyl-CoA = 1,2-di-(9Z-octadecenoyl)-sn-glycero-3-phosphoethanolamine + CoA. It catalyses the reaction 1-hexadecanoyl-sn-glycero-3-phosphoethanolamine + (9Z)-octadecenoyl-CoA = 1-hexadecanoyl-2-(9Z-octadecenoyl)-sn-glycero-3-phosphoethanolamine + CoA. It carries out the reaction 1-(10Z-heptadecenoyl)-sn-glycero-3-phosphoethanolamine + hexadecanoyl-CoA = 1-(10Z-heptadecenoyl)-2-hexadecanoyl-sn-glycero-3-phosphoethanolamine + CoA. The enzyme catalyses 1-(9Z-octadecenoyl)-sn-glycero-3-phospho-L-serine + octadecanoyl-CoA = 1-(9Z-octadecenoyl)-2-octadecanoyl-sn-glycero-3-phospho-L-serine + CoA. The catalysed reaction is 1-(9Z-octadecenoyl)-sn-glycero-3-phospho-L-serine + (9Z)-hexadecenoyl-CoA = 1-(9Z-octadecenoyl)-2-(9Z-hexadecenoyl)-sn-glycero-3-phospho-L-serine + CoA. It catalyses the reaction 1-(9Z-octadecenoyl)-sn-glycero-3-phospho-L-serine + (9Z,12Z)-octadecadienoyl-CoA = 1-(9Z-octadecenoyl)-2-(9Z,12Z-octadienoyl)-sn-glycero-3-phospho-L-serine + CoA. It carries out the reaction 1-hexadecanoyl-sn-glycero-3-phosphocholine + (9Z)-octadecenoyl-CoA = 1-hexadecanoyl-2-(9Z-octadecenoyl)-sn-glycero-3-phosphocholine + CoA. The enzyme catalyses 1-(10Z-heptadecenoyl)-sn-glycero-3-phosphoethanolamine + (9Z)-octadecenoyl-CoA = 1-(10Z-heptadecenoyl)-2-(9Z-octadecenoyl)-sn-glycero-3-phosphoethanolamine + CoA. It functions in the pathway lipid metabolism; phospholipid metabolism. Its function is as follows. Acyltransferase which catalyzes the transfer of an acyl group from an acyl-CoA towards a lysophospholipid producing a phospholipid and participates in the reacylation step of the phospholipid remodeling pathway also known as the Lands cycle. Acts on lysophosphatidylserine (1-acyl-2-hydroxy-sn-glycero-3-phospho-L-serine or LPS) and lysophosphatidylethanolamine (1-acyl-sn-glycero-3-phosphoethanolamine or LPE), and to a lesser extend lysophosphatidylcholine. Prefers oleoyl-CoA as the acyl donor and 1-oleoyl-LPE as acceptor. May play a role in neurite outgrowth during neuronal differentiation. This Mus musculus (Mouse) protein is Membrane-bound glycerophospholipid O-acyltransferase 1.